Here is a 309-residue protein sequence, read N- to C-terminus: MSKAMNADNPEPATKSVAAIAPSLKAEILAEALPYIRKFHGKTIVVKYGGNAMTEEKLKHGFARDVILLKLVGMNPVVVHGGGPQIDEALKKVGKVGTFIQGMRVTDEETMEVVEWVLGGEVQQDIVMLINQYGGQAVGLTGKDGGLIRAKRLQMPDRENPGTFIDIGYVGDIEAINPAVVKALQDDAFIPVISPIGFSDDGQAYNINADVVAGKMAEILKAEKLVMMTNIPGVMDKKGNLLTDLSAREIEELFADGTISGGMLPKISSALDAAKSGVHSVHIIDGRIEHSLLLEILTEQAFGTMIRSH.

Substrate-binding positions include 82–83 (GG), R104, and N206.

This sequence belongs to the acetylglutamate kinase family. ArgB subfamily.

The protein localises to the cytoplasm. It catalyses the reaction N-acetyl-L-glutamate + ATP = N-acetyl-L-glutamyl 5-phosphate + ADP. It functions in the pathway amino-acid biosynthesis; L-arginine biosynthesis; N(2)-acetyl-L-ornithine from L-glutamate: step 2/4. Functionally, catalyzes the ATP-dependent phosphorylation of N-acetyl-L-glutamate. This is Acetylglutamate kinase from Cupriavidus metallidurans (strain ATCC 43123 / DSM 2839 / NBRC 102507 / CH34) (Ralstonia metallidurans).